The sequence spans 377 residues: Chaperone protein DnaJ (377 aa).

The J domain occupies 5 to 70 (DYYEILGVER…EKRAAYDQYG (66 aa)). The CR-type zinc finger occupies 134–212 (GITKDIQIQT…CHGDGRVHKT (79 aa)). Residues C147, C150, C164, C167, C186, C189, C200, and C203 each coordinate Zn(2+). CXXCXGXG motif repeat units follow at residues 147–154 (CDHCNGSG), 164–171 (CPTCHGHG), 186–193 (CPHCHGTG), and 200–207 (CKKCHGDG).

This sequence belongs to the DnaJ family. As to quaternary structure, homodimer. Requires Zn(2+) as cofactor.

It is found in the cytoplasm. Its function is as follows. Participates actively in the response to hyperosmotic and heat shock by preventing the aggregation of stress-denatured proteins and by disaggregating proteins, also in an autonomous, DnaK-independent fashion. Unfolded proteins bind initially to DnaJ; upon interaction with the DnaJ-bound protein, DnaK hydrolyzes its bound ATP, resulting in the formation of a stable complex. GrpE releases ADP from DnaK; ATP binding to DnaK triggers the release of the substrate protein, thus completing the reaction cycle. Several rounds of ATP-dependent interactions between DnaJ, DnaK and GrpE are required for fully efficient folding. Also involved, together with DnaK and GrpE, in the DNA replication of plasmids through activation of initiation proteins. This is Chaperone protein DnaJ from Actinobacillus succinogenes (strain ATCC 55618 / DSM 22257 / CCUG 43843 / 130Z).